A 302-amino-acid polypeptide reads, in one-letter code: NmrA-like family domain-containing protein DDB_G0286605 (302 aa).

Residues 9–14 (GGTGYQ), 35–39 (RNPES), 56–57 (DE), 78–80 (TNS), lysine 130, and 157–160 (YFQN) each bind NADP(+).

Belongs to the NmrA-type oxidoreductase family.

In terms of biological role, may be a redox sensor protein. This chain is NmrA-like family domain-containing protein DDB_G0286605, found in Dictyostelium discoideum (Social amoeba).